A 644-amino-acid polypeptide reads, in one-letter code: Exoribonuclease 2 (644 aa).

An RNB domain is found at 189 to 516; sequence RQDLTALNFV…NHRLLKAVIK (328 aa). An S1 motif domain is found at 561–643; that stretch reads NTRFAAEIID…ETRSIIARPA (83 aa).

Belongs to the RNR ribonuclease family. RNase II subfamily.

It localises to the cytoplasm. The enzyme catalyses Exonucleolytic cleavage in the 3'- to 5'-direction to yield nucleoside 5'-phosphates.. Involved in mRNA degradation. Hydrolyzes single-stranded polyribonucleotides processively in the 3' to 5' direction. The sequence is that of Exoribonuclease 2 from Salmonella agona (strain SL483).